The sequence spans 318 residues: MIVVTGGAGFIGANLVKALNARGREDVLVVDDLSDGTKFVNLADCTLGDYLDKDDFLARVKAELRGEPSELPPIEAIFHEGACSDTTEWDGKFMLENNFEYSKVLLHFCQYKRIPFLYASSAATYGGSEVFVEAPEHEKPLNVYGYSKLLFDQYVRVHWESFDAQVVGFRYFNVYGPREQHKGKMASVAYHHHSQVKRGENPKLFGAWDGYEAGMQSRDFVYVGDVVDVNLWCLDHPEVSGIFNLGTGRAEPFKAIAETVIDYYATGKIDYIDFPEELKGRYQSYTRADISRLREAGYKAEFKTVREGVSAYLDWLNG.

NADP(+)-binding positions include 10 to 11 (FI), 31 to 32 (DD), Lys38, Lys53, 80 to 84 (EGACS), and Asn97. Tyr144 functions as the Proton acceptor in the catalytic mechanism. Position 148 (Lys148) interacts with NADP(+). Asn173 lines the substrate pocket. The NADP(+) site is built by Val174 and Lys182. Lys182 functions as the Proton acceptor in the catalytic mechanism. Substrate-binding positions include Lys184, His191, 205 to 208 (FGAW), Arg218, and Tyr282.

This sequence belongs to the NAD(P)-dependent epimerase/dehydratase family. HldD subfamily. Homopentamer. NADP(+) serves as cofactor.

The catalysed reaction is ADP-D-glycero-beta-D-manno-heptose = ADP-L-glycero-beta-D-manno-heptose. The protein operates within nucleotide-sugar biosynthesis; ADP-L-glycero-beta-D-manno-heptose biosynthesis; ADP-L-glycero-beta-D-manno-heptose from D-glycero-beta-D-manno-heptose 7-phosphate: step 4/4. In terms of biological role, catalyzes the interconversion between ADP-D-glycero-beta-D-manno-heptose and ADP-L-glycero-beta-D-manno-heptose via an epimerization at carbon 6 of the heptose. This is ADP-L-glycero-D-manno-heptose-6-epimerase from Chromohalobacter salexigens (strain ATCC BAA-138 / DSM 3043 / CIP 106854 / NCIMB 13768 / 1H11).